Here is a 959-residue protein sequence, read N- to C-terminus: MMKKGKGKNSGLLPNSFKIISSCLKTVSANATNVASSVRSAGASVAASISAAEDDKDQVTWAGFGILELGQHVTRHVLLLGYQNGFQVFDVEDASNFNELVSKRGGPVSFLQMQPLPARSGDHEGFWNSHPLLLVVAGDETNGTGLGHSFSQNGSLARDGSSDSKAGDAINYPTTVRFYSLRSHSYVYVLRFRSSVCMIRCSSRVVAVGLANQIYCVDALTLENKFSVLTYPVPQPVRQGTTRVNVGYGPMAVGPRWLAYASKSSMTMKTGRLSPQTFTSSPSLSPSSSSGGSSFMARYAMESSKQLANGLINLGDMGYKTLSKYCQDMLPDGSTSPASPNAIWKVGGVSGSDAENAGMVAVKDLVSGALVSQFKAHTSPISALCFDPSGTLLVTASVCGNNINVFQIMPSRSHNAPGDLSYEWESSHVHLFKLHRGITSAIVQDICFSQQSQWVAIISSKGTCHIFVLNSSGSDAAFQPCEGEEPTRLPASSLPWWFTQSLSSNQQSLSPPTAVALSVVSRIKYSSFGWLNTVSNATTAATGKVFVPSGAVAAVFHKSVTHDLQLNSRTNALEHILVYTPSGHVVQHELLPSVCTESPENGLRVQKTSHVQVQEDDLRVKVEPIQWWDVCRRSDWLETEERLPKSITEKQYDLETVSNHLTSHEDACLSLDMNSHFSEDKYLKSCSEKPPERSHCYLSNFEVKVTSGMLPVWQNSKISFHVMDSPRDSSSTGGEFEIEKVPAHELEIKQKKLLPVFDHFHSTKATLEDRFSMKCYHTSATGSHQVNGKICQDIINCHSKPGSIESAESSEEGSTKQMENLHDSDHMSNSIKSSLPLYPTVNGIYKEIEKNNANGWMEKPVTAKLSTLKETRITNGFTTPPILTDSVNEQMLSTGKPPMGFGFALHEEHCKAVADPKEEHLKKKLDEVTNVHHLNVNNNNTEKLQGDKMVHGMVSFVGD.

WD repeat units follow at residues 376–416 (AHTS…SHNA) and 438–479 (ITSA…AAFQ). Residues 802–832 (GSIESAESSEEGSTKQMENLHDSDHMSNSIK) are disordered.

This sequence belongs to the WD repeat PROPPIN family. As to quaternary structure, component of the PI(3,5)P2 regulatory complex at least composed of ATG18, SAC/FIG4, FAB1 and VAC14. Expressed in leaves.

It localises to the preautophagosomal structure membrane. Its subcellular location is the vacuole membrane. The PI(3,5)P2 regulatory complex regulates both the synthesis and turnover of phosphatidylinositol 3,5-bisphosphate (PtdIns(3,5)P2). Required for autophagy. This Arabidopsis thaliana (Mouse-ear cress) protein is Autophagy-related protein 18g (ATG18G).